The following is a 416-amino-acid chain: Serine hydroxymethyltransferase (416 aa).

(6S)-5,6,7,8-tetrahydrofolate is bound by residues Leu118 and 122–124; that span reads GHL. Lys226 is subject to N6-(pyridoxal phosphate)lysine. (6S)-5,6,7,8-tetrahydrofolate contacts are provided by residues Glu242 and 350-352; that span reads SPF.

It belongs to the SHMT family. Homodimer. Pyridoxal 5'-phosphate serves as cofactor.

It localises to the cytoplasm. It catalyses the reaction (6R)-5,10-methylene-5,6,7,8-tetrahydrofolate + glycine + H2O = (6S)-5,6,7,8-tetrahydrofolate + L-serine. The protein operates within one-carbon metabolism; tetrahydrofolate interconversion. It participates in amino-acid biosynthesis; glycine biosynthesis; glycine from L-serine: step 1/1. In terms of biological role, catalyzes the reversible interconversion of serine and glycine with tetrahydrofolate (THF) serving as the one-carbon carrier. This reaction serves as the major source of one-carbon groups required for the biosynthesis of purines, thymidylate, methionine, and other important biomolecules. Also exhibits THF-independent aldolase activity toward beta-hydroxyamino acids, producing glycine and aldehydes, via a retro-aldol mechanism. The sequence is that of Serine hydroxymethyltransferase from Wolinella succinogenes (strain ATCC 29543 / DSM 1740 / CCUG 13145 / JCM 31913 / LMG 7466 / NCTC 11488 / FDC 602W) (Vibrio succinogenes).